Reading from the N-terminus, the 433-residue chain is Arabinooligosaccharide-binding protein (433 aa).

The first 21 residues, 1-21 (MKKMTVCFLVLMMLLTLVIAG), serve as a signal peptide directing secretion. C22 is lipidated: N-palmitoyl cysteine. C22 carries S-diacylglycerol cysteine lipidation.

The protein belongs to the bacterial solute-binding protein 1 family. The complex is composed of two ATP-binding proteins (MsmX), two transmembrane proteins (AraP and AraQ) and a solute-binding protein (AraN).

The protein localises to the cell membrane. Part of the ABC transporter complex AraNPQ involved in the uptake of arabinooligosaccharides. Transports alpha-1,5-arabinooligosaccharides, at least up to four L-arabinosyl units. AraN captures the substrate and delivers it to the two transmembrane components. In Bacillus subtilis (strain 168), this protein is Arabinooligosaccharide-binding protein.